Here is a 629-residue protein sequence, read N- to C-terminus: MFASRFDPSQLTAPAASAPEGIVGTTPPAIVPLKRQATESDNEEYGSHQDSDESSNSSSEEDEDRMQVDYGASEEDSSEVEEEESKPSTHSTVLSRFKQTVSLQERLGASDIAESKEDESIEDEAASTHQLKQIPQPEFVKNPMNLNTNSLQFKSTGWLNTEKIYYDNSLIKPFSDYANELEAKLLQNICKNFSTNTFPIQSIILDSILPVLNFTLNVSKRNFTRRIGDILVNAATGSGKTLAYSIPIVQTLFKRQINRLRCIIIVPTKLLINQVYTTLTKLTQGTSLIVSIAKLENSLKDEHKKLSNLEPDILITTPGRLVDHLNMKSINLKNLKFLIIDEADRLLNQSFQGWCPKLMSHLKTDKLDTLPGNVIKMIFSATLTTNTEKLNGLNLYKPKLFLKQTDKLYQLPNKLNEFNINIPTAKSIYKPLILLYSICQFMAHSPIAAKILIFVKSNESSIRLSKLLQLICESRSQSSVLKNLQNLAVSINSVNSNNSKAENKKIVANFSHPSESAGITILITTDIMSRGIDINDITQVINYDPPMSSQQYVHRVGRTARANELGSAYNLLVGRGERTFFDDLNKDLDRDGKSVQPLELDFTLLESDSELYTSSLESLKNYHNNTAQA.

The tract at residues 1 to 130 (MFASRFDPSQ…IEDEAASTHQ (130 aa)) is disordered. Over residues 72-84 (ASEEDSSEVEEEE) the composition is skewed to acidic residues. Serine 73, serine 77, and serine 78 each carry phosphoserine. Residues 88–103 (STHSTVLSRFKQTVSL) show a composition bias toward polar residues. Over residues 116 to 125 (KEDESIEDEA) the composition is skewed to acidic residues. Residues 197 to 205 (TFPIQSIIL) carry the Q motif motif. Residues 221–401 (RNFTRRIGDI…GLNLYKPKLF (181 aa)) enclose the Helicase ATP-binding domain. 234-241 (AATGSGKT) is a binding site for ATP. A DEAD box motif is present at residues 341–344 (DEAD). Residues 437 to 603 (SICQFMAHSP…SVQPLELDFT (167 aa)) enclose the Helicase C-terminal domain.

Belongs to the DEAD box helicase family. DDX51/DBP6 subfamily. Associated with pre-ribosomal particles. Interacts with DBP9 and RSA3. Together with NOP8, URB1, URB2 and RSA3, forms an RNA-independent complex, which is required during early maturation of nascent 60S ribosomal subunits.

The protein resides in the nucleus. The protein localises to the nucleolus. It carries out the reaction ATP + H2O = ADP + phosphate + H(+). In terms of biological role, ATP-binding RNA helicase involved in the biogenesis of 60S ribosomal subunits and is required for the normal formation of 25S and 5.8S rRNAs. The protein is ATP-dependent RNA helicase DBP6 (DBP6) of Saccharomyces cerevisiae (strain YJM789) (Baker's yeast).